We begin with the raw amino-acid sequence, 324 residues long: Probable cell division protein WhiA (324 aa).

The segment at residues 276-310 is a DNA-binding region (H-T-H motif); sequence TLKELGEMMQGGKVSKSGINHRLRKIDEFADKLRN.

Belongs to the WhiA family.

Functionally, involved in cell division and chromosome segregation. This is Probable cell division protein WhiA from Shouchella clausii (strain KSM-K16) (Alkalihalobacillus clausii).